The chain runs to 322 residues: Serine protease 38 (322 aa).

A signal peptide spans 1–28 (MAALTSGLGVLGYLLFPLLLASPTWVTS). The propeptide at 29–55 (VSRRHPKSQANSLSGDVACGQPVLQGK) is activation peptide. Residues 56-289 (LLGGEFARDR…FLSWIRYHLQ (234 aa)) enclose the Peptidase S1 domain. A disulfide bridge connects residues Cys-81 and Cys-97. Catalysis depends on charge relay system residues His-96 and Asp-146. N-linked (GlcNAc...) asparagine glycosylation is present at Asn-176. 3 disulfides stabilise this stretch: Cys-179-Cys-247, Cys-210-Cys-226, and Cys-237-Cys-265. Ser-241 serves as the catalytic Charge relay system. Asn-250 and Asn-276 each carry an N-linked (GlcNAc...) asparagine glycan.

This sequence belongs to the peptidase S1 family.

The protein resides in the secreted. This is Serine protease 38 (Prss38) from Mus musculus (Mouse).